Consider the following 354-residue polypeptide: MFQKKTYAVFLILLLMMFTAACSGSKTSAEKKESETEKSSDIAQVKIKDVSYTLPSKYDKSTSDDQLVLKVNVAVKNTGKDPLNVDSMDFTLYQGDTKMSDTDPEDYSEKLQGSTINADKSVEGNLFFVVDKGKQYELNYTPESYGDKKPKSVTFKIDGKDKKILATADKLQDSAKALSAYVDVLLFGKDNADFEKITGANKNEIVNDFNESAKDGYLSASGLSSTYADSKALDNIVNGIKEGLSKNSSIQAKTTSISKDEAIVEATVKPVDASSLSDRIEDKVKDYYSKNSSASYEEAVKYALQVYPEEFKKLGPASSEKTVEVKMKKNDIDQWQLDMDDYRAAELVEAFIKE.

The first 21 residues, 1–21 (MFQKKTYAVFLILLLMMFTAA), serve as a signal peptide directing secretion. The N-palmitoyl cysteine moiety is linked to residue Cys-22. Residue Cys-22 is the site of S-diacylglycerol cysteine attachment.

Its subcellular location is the cell membrane. It is found in the membrane raft. This is an uncharacterized protein from Bacillus subtilis (strain 168).